The sequence spans 884 residues: Probable mixed-linked glucan synthase 9 (884 aa).

The span at 1–27 shows a compositional bias: low complexity; the sequence is MALSPAAAGRTGRNNNNDAGLADPLLP. Residues 1 to 34 form a disordered region; that stretch reads MALSPAAAGRTGRNNNNDAGLADPLLPAGGGGGG. 2 helical membrane passes run 73–93 and 104–124; these read VLLH…VLFL and AMWL…TWLL. Residue Asp195 is part of the active site. Residues Asp396 and Asp398 each contribute to the substrate site. Asp565 is an active-site residue. A run of 6 helical transmembrane segments spans residues 640–660, 672–692, 708–728, 765–785, 802–822, and 830–850; these read TAYP…VIWL, FSTY…IGLV, EQFY…HIVL, LLAP…AAAG, AGLV…LGIM, and CALF…FVAV.

This sequence belongs to the glycosyltransferase 2 family. Plant cellulose synthase-like F subfamily.

The protein resides in the golgi apparatus membrane. Functionally, may catalyze both beta-1,3 and beta-1,4 glycosidic linkage on beta-D-glucan. Essential for (1,3;1,4)-beta-D-glucans synthesis in grasses and cereals (Poaceae). The mixed-linked glucans (which are not present in walls of dicotyledons or most other monocotyledonous plants) are particularly important constituents of the walls of the starchy endosperm and aleurone cells of cereal grains such as oats, wheat, rice and barley. They can account for up to 70% by weight of the wall. The protein is Probable mixed-linked glucan synthase 9 (CSLF9) of Oryza sativa subsp. japonica (Rice).